The primary structure comprises 563 residues: Arginine--tRNA ligase (563 aa).

It belongs to the class-I aminoacyl-tRNA synthetase family. As to quaternary structure, monomer.

It carries out the reaction tRNA(Arg) + L-arginine + ATP = L-arginyl-tRNA(Arg) + AMP + diphosphate. The polypeptide is Arginine--tRNA ligase (Encephalitozoon cuniculi (strain GB-M1) (Microsporidian parasite)).